The primary structure comprises 346 residues: Serpentine receptor class beta-11 (346 aa).

7 helical membrane passes run 26–46, 57–77, 102–122, 139–159, 186–206, 239–259, and 278–298; these read YQMI…LFKL, TIFI…LTTS, IWNF…CSVT, SVVM…CIIF, FTFF…DLIL, VFLI…VVFF, and TFST…SSFF.

This sequence belongs to the nematode receptor-like protein srb family.

The protein resides in the membrane. The chain is Serpentine receptor class beta-11 (srb-11) from Caenorhabditis elegans.